A 217-amino-acid chain; its full sequence is PRELI domain-containing protein 1, mitochondrial (217 aa).

The PRELI/MSF1 domain maps to 36-174; sequence TEDIVHREVT…ILAKLQGEAP (139 aa).

In terms of assembly, forms a complex with TRIAP1 in the mitochondrion intermembrane space. Interacts with OPA1 and AIFM1. As to expression, abundantly expressed in all tissues tested except testis with highest levels in thymus.

Its subcellular location is the mitochondrion. It localises to the mitochondrion intermembrane space. It carries out the reaction a 1,2-diacyl-sn-glycero-3-phosphate(in) = a 1,2-diacyl-sn-glycero-3-phosphate(out). Involved in the modulation of the mitochondrial apoptotic pathway by ensuring the accumulation of cardiolipin (CL) in mitochondrial membranes. In vitro, the TRIAP1:PRELID1 complex mediates the transfer of phosphatidic acid (PA) between liposomes and probably functions as a PA transporter across the mitochondrion intermembrane space to provide PA for CL synthesis in the inner membrane. Regulates the mitochondrial apoptotic pathway in primary Th cells. Regulates Th cell differentiation by down-regulating STAT6 thereby reducing IL-4-induced Th2 cell number. May be important for the development of vital and immunocompetent organs. This chain is PRELI domain-containing protein 1, mitochondrial (Prelid1), found in Mus musculus (Mouse).